Reading from the N-terminus, the 235-residue chain is MFTLIVILAVSYLIGSIPTSIIAGRLLKGIDIRDFGSGNAGGTNAFRVLGWKAGLTVTILDIVKGAIAAISVVVFFESHPIGPLPDINPIALRLIAGLSAVFGHVFTVFAGFKGGKGVSTAAGMMFGIAPVTTLIVLGVFLLVVFLSRYVSVASILAAIAFPVIIAVRKYLFDLGEGLDYYIRMFNTNVFIHDSLDYHLLIFGFIVAAAIMYTHRANIRRLLSGKENRVKFHGHS.

6 consecutive transmembrane segments (helical) span residues 2-22 (FTLI…TSII), 56-76 (TVTI…VVFF), 94-114 (LIAG…GFKG), 126-146 (FGIA…VVFL), 152-172 (VASI…KYLF), and 190-210 (FIHD…AAAI).

Belongs to the PlsY family. Probably interacts with PlsX.

Its subcellular location is the cell inner membrane. The enzyme catalyses an acyl phosphate + sn-glycerol 3-phosphate = a 1-acyl-sn-glycero-3-phosphate + phosphate. Its pathway is lipid metabolism; phospholipid metabolism. Functionally, catalyzes the transfer of an acyl group from acyl-phosphate (acyl-PO(4)) to glycerol-3-phosphate (G3P) to form lysophosphatidic acid (LPA). This enzyme utilizes acyl-phosphate as fatty acyl donor, but not acyl-CoA or acyl-ACP. This is Glycerol-3-phosphate acyltransferase from Chlorobium phaeobacteroides (strain BS1).